Reading from the N-terminus, the 471-residue chain is MVIRSGKTNLNPPCALMAPSSSCDCIIVGSGLSGLIAARNLSRVNYSVLVIEAQERLGGRMYGEYLPSGQWIDRGGQWVGPTQDRFLALLNEYNIERFPSPADGLKVLLFDGKRYEFDGFFQGVFQGEAPKISSDEWNDAMVAWEKFNTLAQSLDEQHPEATPENKKLDSQTFADWIKENTHTAFGHWYFSYMCRAVGFLGPAEPSQVSLLHILWGHKSASQGENPEAELLHGGAGQIPQKIAAELGNSILLGEPVIHIAQDDKGVEVTTTTGKYQGKFAIVATPPHLAGRITYSPPMPPLRQQLTQRVPMGTCCKLLISYDRPFWREKGLAGIGLGNTTWIELCADSSDPTTGVGVIASFVVGDRYGKWIAMGEAERRQGVLSDLALYFGEEALSPETYDEVDWPSEQWVGGGYAAFMPPGVWTSFGQALSAPVGRIHWAGTEIAPRWAGFFDGAIRTGEAAAKAIIGLL.

Position 31 (G31) interacts with Mg(2+). An FAD-binding site is contributed by S33. Residue G34 coordinates Mg(2+). Residues E52, R60, and V256 each contribute to the FAD site. A283 contacts Mg(2+). F453 is an FAD binding site.

The protein belongs to the flavin monoamine oxidase family. FAD serves as cofactor. Mg(2+) is required as a cofactor.

Its subcellular location is the cellular thylakoid membrane. It catalyses the reaction a plastoquinone + an L-alpha-amino acid + H2O = a plastoquinol + a 2-oxocarboxylate + NH4(+). It carries out the reaction a plastoquinone + L-arginine + H2O = a plastoquinol + 5-guanidino-2-oxopentanoate + NH4(+). It functions in the pathway amino-acid degradation; L-arginine degradation. With respect to regulation, inhibited by Ca(2+) and other cations such as Ni(2+), Co(2+) and Zn(2+). The inhibition by o-phenanthroline and salicylhydroxamic acid suggests the presence of a metal cofactor besides FAD in the enzyme. The L-arginine-stimulated O(2) consumption involving slr0782 is inhibited by inhibitors of the respiratory electron transport chain, such as KCN and 2,5-dibromo-3-methyl-6-isopropyl-p-benzoquinone, which indicates a participation of the cytochrome b6/f complex and of a cytochrome oxidase. L-amino acid dehydrogenase with broad substrate specificity. Catalyzes the oxidative deamination of various L-amino acids, L-Arg and L-Cys being the best substrates in vitro. Likely functions mainly as an L-arginine dehydrogenase in vivo. Probably feeds electrons from L-arginine oxidation and also from the oxidation of other L-amino acids into the respiratory electron transport chain associated to the thylakoid membrane, and does not directly interact with molecular oxygen but donates electrons to the plastoquinone pool. Cannot use D-amino acids as substrates. This Synechocystis sp. (strain ATCC 27184 / PCC 6803 / Kazusa) protein is L-amino acid dehydrogenase.